The following is a 982-amino-acid chain: Chromosome partition protein Smc (982 aa).

Position 33 to 40 (33 to 40 (PNGSGKSN)) interacts with ATP. 2 coiled-coil regions span residues 171–235 (RYTK…LVAD) and 263–377 (QLQL…NLNQ). Residues 416–535 (TGLLNTLNTF…ASDLQAALKL (120 aa)) enclose the SMC hinge domain. Coiled coils occupy residues 568-627 (LSLY…ERVN), 669-713 (AERD…RSQL), and 753-818 (IKLS…EIDE).

The protein belongs to the SMC family. In terms of assembly, homodimer.

It localises to the cytoplasm. Required for chromosome condensation and partitioning. This chain is Chromosome partition protein Smc, found in Mycoplasma pneumoniae (strain ATCC 29342 / M129 / Subtype 1) (Mycoplasmoides pneumoniae).